A 163-amino-acid polypeptide reads, in one-letter code: Probable ribosome biogenesis protein RLP24 (163 aa).

It belongs to the eukaryotic ribosomal protein eL24 family. In terms of assembly, associated with nucleolar and cytoplasmic pre-60S particles. At the end of biogenesis it dissociates from cytoplasmic pre-60S particles and is likely to be exchanged for its ribosomal homolog, RPL24.

The protein resides in the nucleus. It is found in the nucleolus. Its function is as follows. Involved in the biogenesis of the 60S ribosomal subunit. Ensures the docking of GTPBP4/NOG1 to pre-60S particles. This chain is Probable ribosome biogenesis protein RLP24 (RSL24D1), found in Homo sapiens (Human).